A 222-amino-acid chain; its full sequence is 3-demethoxyubiquinol 3-hydroxylase (222 aa).

Fe cation is bound by residues E71, E101, H104, E153, E185, and H188.

This sequence belongs to the COQ7 family. Fe cation is required as a cofactor.

The protein localises to the cell membrane. It carries out the reaction a 5-methoxy-2-methyl-3-(all-trans-polyprenyl)benzene-1,4-diol + AH2 + O2 = a 3-demethylubiquinol + A + H2O. It functions in the pathway cofactor biosynthesis; ubiquinone biosynthesis. Its function is as follows. Catalyzes the hydroxylation of 2-nonaprenyl-3-methyl-6-methoxy-1,4-benzoquinol during ubiquinone biosynthesis. The polypeptide is 3-demethoxyubiquinol 3-hydroxylase (Bordetella pertussis (strain Tohama I / ATCC BAA-589 / NCTC 13251)).